We begin with the raw amino-acid sequence, 177 residues long: ATP synthase subunit delta (177 aa).

The protein belongs to the ATPase delta chain family. In terms of assembly, F-type ATPases have 2 components, F(1) - the catalytic core - and F(0) - the membrane proton channel. F(1) has five subunits: alpha(3), beta(3), gamma(1), delta(1), epsilon(1). F(0) has three main subunits: a(1), b(2) and c(10-14). The alpha and beta chains form an alternating ring which encloses part of the gamma chain. F(1) is attached to F(0) by a central stalk formed by the gamma and epsilon chains, while a peripheral stalk is formed by the delta and b chains.

It localises to the cell inner membrane. In terms of biological role, f(1)F(0) ATP synthase produces ATP from ADP in the presence of a proton or sodium gradient. F-type ATPases consist of two structural domains, F(1) containing the extramembraneous catalytic core and F(0) containing the membrane proton channel, linked together by a central stalk and a peripheral stalk. During catalysis, ATP synthesis in the catalytic domain of F(1) is coupled via a rotary mechanism of the central stalk subunits to proton translocation. Functionally, this protein is part of the stalk that links CF(0) to CF(1). It either transmits conformational changes from CF(0) to CF(1) or is implicated in proton conduction. The sequence is that of ATP synthase subunit delta from Neisseria meningitidis serogroup B (strain ATCC BAA-335 / MC58).